We begin with the raw amino-acid sequence, 151 residues long: Cytochrome c-type biogenesis protein CcmE 2 (151 aa).

Residues 1-8 (MNPLRKKR) are Cytoplasmic-facing. The helical; Signal-anchor for type II membrane protein transmembrane segment at 9–29 (LVIILAILVGVGAAVGLALSA) threads the bilayer. Residues 30–151 (LQQNINLFYT…QSAPAPGKEG (122 aa)) are Periplasmic-facing. Positions 124 and 128 each coordinate heme.

The protein belongs to the CcmE/CycJ family.

The protein localises to the cell inner membrane. Its function is as follows. Heme chaperone required for the biogenesis of c-type cytochromes. Transiently binds heme delivered by CcmC and transfers the heme to apo-cytochromes in a process facilitated by CcmF and CcmH. The polypeptide is Cytochrome c-type biogenesis protein CcmE 2 (Pseudomonas fluorescens (strain Pf0-1)).